A 268-amino-acid polypeptide reads, in one-letter code: 3-methyl-2-oxobutanoate hydroxymethyltransferase (268 aa).

Positions 44 and 83 each coordinate Mg(2+). 3-methyl-2-oxobutanoate-binding positions include 44-45 (DS), Asp83, and Lys113. A Mg(2+)-binding site is contributed by Glu115. The active-site Proton acceptor is Glu183.

The protein belongs to the PanB family. In terms of assembly, homodecamer; pentamer of dimers. Mg(2+) is required as a cofactor.

It localises to the cytoplasm. It carries out the reaction 3-methyl-2-oxobutanoate + (6R)-5,10-methylene-5,6,7,8-tetrahydrofolate + H2O = 2-dehydropantoate + (6S)-5,6,7,8-tetrahydrofolate. The protein operates within cofactor biosynthesis; (R)-pantothenate biosynthesis; (R)-pantoate from 3-methyl-2-oxobutanoate: step 1/2. Catalyzes the reversible reaction in which hydroxymethyl group from 5,10-methylenetetrahydrofolate is transferred onto alpha-ketoisovalerate to form ketopantoate. This is 3-methyl-2-oxobutanoate hydroxymethyltransferase from Leptospira biflexa serovar Patoc (strain Patoc 1 / Ames).